Consider the following 258-residue polypeptide: Probable enoyl-CoA hydratase (258 aa).

Belongs to the enoyl-CoA hydratase/isomerase family.

It carries out the reaction a (3S)-3-hydroxyacyl-CoA = a (2E)-enoyl-CoA + H2O. It catalyses the reaction a 4-saturated-(3S)-3-hydroxyacyl-CoA = a (3E)-enoyl-CoA + H2O. The protein operates within lipid metabolism; fatty acid beta-oxidation. Its function is as follows. Involved in the degradation of long-chain fatty acids. The chain is Probable enoyl-CoA hydratase (fadB) from Bacillus subtilis (strain 168).